We begin with the raw amino-acid sequence, 312 residues long: R2-like ligand binding oxidase (312 aa).

Mn(2+) is bound by residues E68, E101, and H104. The 3-(O4'-tyrosyl)-valine (Val-Tyr) cross-link spans 71–162; the sequence is VTQDIQPFMA…QAQVRASVTY (92 aa). E101 contacts Fe cation. Fe cation is bound by residues E167, E202, and H205.

This sequence belongs to the ribonucleoside diphosphate reductase small chain family. R2-like ligand binding oxidase subfamily. In terms of assembly, homodimer. Requires Fe cation as cofactor. Mn(2+) is required as a cofactor.

Probable oxidase that might be involved in lipid metabolism. The polypeptide is R2-like ligand binding oxidase (Mycolicibacterium gilvum (strain PYR-GCK) (Mycobacterium gilvum (strain PYR-GCK))).